Reading from the N-terminus, the 121-residue chain is Probable V-type proton ATPase subunit F (121 aa).

This sequence belongs to the V-ATPase F subunit family. In terms of assembly, V-ATPase is a heteromultimeric enzyme made up of two complexes: the ATP-hydrolytic V1 complex and the proton translocation V0 complex. The V1 complex consists of three catalytic AB heterodimers that form a heterohexamer, three peripheral stalks each consisting of EG heterodimers, one central rotor including subunits D and F, and the regulatory subunits C and H. The proton translocation complex V0 consists of the proton transport subunit a, a ring of proteolipid subunits c9c'', rotary subunit d, subunits e and f, and the accessory subunits vah-19/Ac45 and vah-20/PRR.

Functionally, subunit of the V1 complex of vacuolar(H+)-ATPase (V-ATPase), a multisubunit enzyme composed of a peripheral complex (V1) that hydrolyzes ATP and a membrane integral complex (V0) that translocates protons. V-ATPase is responsible for acidifying and maintaining the pH of intracellular compartments and in some cell types, is targeted to the plasma membrane, where it is responsible for acidifying the extracellular environment. Required along with other vacuolar ATPase components for the removal of protein aggregates which form in immature oocytes in the distal gonad. This removal occurs as the oocytes mature and move to the proximal gonad, is triggered by the introduction of sperm through mating and occurs before fertilization. The introduction of sperm triggers V-ATPase accumulation in proximal oocytes and induces lysosomal acidification which leads to engulfing of protein aggregates by lysosomes and subsequent clearance of the aggregates. Lysosomal acidification also leads to changes in mitochondrial morphology and function. Mitochondria in distal immature oocytes are fragmented, produce high levels of reactive oxygen species (ROS) and have high membrane potential, indicative of metabolic inactivity. In contrast, mitochondria in proximal mature oocytes are tubular with lower ROS levels and membrane potential, indicative of an active metabolic state required for aggregate mobilization before clearance. The chain is Probable V-type proton ATPase subunit F from Caenorhabditis elegans.